The sequence spans 501 residues: uncharacterized protein (501 aa).

Glu236 (proton donor) is an active-site residue. Glu333 (nucleophile) is an active-site residue.

The protein belongs to the glycosyl hydrolase 5 (cellulase A) family.

The protein localises to the mitochondrion intermembrane space. This is an uncharacterized protein from Saccharomyces cerevisiae (strain ATCC 204508 / S288c) (Baker's yeast).